Consider the following 259-residue polypeptide: UPF0246 protein ABBFA_001173 (259 aa).

It belongs to the UPF0246 family.

The protein is UPF0246 protein ABBFA_001173 of Acinetobacter baumannii (strain AB307-0294).